Here is a 56-residue protein sequence, read N- to C-terminus: Alpha-conotoxin TxIA (56 aa).

Residues 1–16 (MFTVFLLVVLATAVVS) form the signal peptide. A propeptide spanning residues 17 to 39 (FTSDRASDDGKAAASDLITLTIK) is cleaved from the precursor. Intrachain disulfides connect C41-C47 and C42-C55. Residues 43–45 (SRP) form a ser-Xaa-Pro motif, crucial for potent interaction with nAChR region. 4-hydroxyproline; partial is present on residues P45 and P46. C55 carries the post-translational modification Cysteine amide.

It belongs to the conotoxin A superfamily. Exists in 4 different forms, depending on hydroxylations. Tx1a-PP does not contain hydroxyproline, tx1a-OP has one hydroxyproline at position 45, tx1a-PO has one hydroxyproline at position 46, and tx1a-PP has two hydroxyprolines at positions 45 and 46. In terms of tissue distribution, expressed by the venom duct. Tx1a that containing 1 or 2 non-hydroxylated prolines are mostly present in part 5 of the venom duct (distal part near the pharynx), whereas tx1a-OO (with 2 hydroxyprolines) is mostly present in part 4 of the venom duct (follewed by part 3).

Its subcellular location is the secreted. Functionally, alpha-conotoxins act on postsynaptic membranes, they bind to the nicotinic acetylcholine receptors (nAChR) and thus inhibit them. This toxin inhibits rat alpha-3-beta-2/CHRNA3-CHRNB2 (IC(50)=3.5 nM), rat alpha-7/CHRNA7 (IC(50)=392 nM) nAChR, and the L.stagnalis soluble acetylcholine receptor (all tested without hydroxyproline). This Conus textile (Cloth-of-gold cone) protein is Alpha-conotoxin TxIA.